Consider the following 370-residue polypeptide: Prolactin-releasing peptide receptor (370 aa).

The Extracellular portion of the chain corresponds to 1–62 (MASSTTRGPR…LQLVHQLKGL (62 aa)). N27 and N36 each carry an N-linked (GlcNAc...) asparagine glycan. The helical transmembrane segment at 63-83 (IVLLYSVVVVVGLVGNCLLVL) threads the bilayer. Over 84–101 (VIARVRRLHNVTNFLIGN) the chain is Cytoplasmic. A helical transmembrane segment spans residues 102–122 (LALSDVLMCTACVPLTLAYAF). At 123–126 (EPRG) the chain is on the extracellular side. The chain crosses the membrane as a helical span at residues 127–147 (WVFGGGLCHLVFFLQPVTVYV). A disulfide bridge links C134 with C211. Topologically, residues 148–175 (SVFTLTTIAVDRYVVLVHPLRRRISLRL) are cytoplasmic. A helical membrane pass occupies residues 176–196 (SAYAVLAIWALSAVLALPAAV). Over 197 to 225 (HTYHVELKPHDVRLCEEFWGSQERQRQLY) the chain is Extracellular. A helical transmembrane segment spans residues 226–246 (AWGLLLVTYLLPLLVILLSYV). The Cytoplasmic segment spans residues 247–276 (RVSVKLRNRVVPGCVTQSQADWDRARRRRT). Residues 277 to 297 (FCLLVVIVVVFAVCWLPLHVF) traverse the membrane as a helical segment. At 298 to 317 (NLLRDLDPHAIDPYAFGLVQ) the chain is on the extracellular side. Residues 318-338 (LLCHWLAMSSACYNPFIYAWL) traverse the membrane as a helical segment. Residues 339–369 (HDSFREELRKLLVAWPRKIAPHGQNMTVSVV) lie on the Cytoplasmic side of the membrane. Residues 365-370 (TVSVVI) are required for interaction with GRIP1, GRIP2 and PICK1.

This sequence belongs to the G-protein coupled receptor 1 family. In terms of assembly, interacts through its C-terminal region with the PDZ domain-containing proteins GRIP1, GRIP2 and PICK1. Interacts with PDZ domains 4 and 5 of GRIP1 and with the PDZ domain of PICK1. Only detected in the pituitary gland and in all cell types of pituitary adenomas.

The protein localises to the cell membrane. Receptor for prolactin-releasing peptide (PrRP). Implicated in lactation, regulation of food intake and pain-signal processing. The polypeptide is Prolactin-releasing peptide receptor (PRLHR) (Homo sapiens (Human)).